A 95-amino-acid chain; its full sequence is Aspartyl/glutamyl-tRNA(Asn/Gln) amidotransferase subunit C (95 aa).

This sequence belongs to the GatC family. In terms of assembly, heterotrimer of A, B and C subunits.

The enzyme catalyses L-glutamyl-tRNA(Gln) + L-glutamine + ATP + H2O = L-glutaminyl-tRNA(Gln) + L-glutamate + ADP + phosphate + H(+). It catalyses the reaction L-aspartyl-tRNA(Asn) + L-glutamine + ATP + H2O = L-asparaginyl-tRNA(Asn) + L-glutamate + ADP + phosphate + 2 H(+). Its function is as follows. Allows the formation of correctly charged Asn-tRNA(Asn) or Gln-tRNA(Gln) through the transamidation of misacylated Asp-tRNA(Asn) or Glu-tRNA(Gln) in organisms which lack either or both of asparaginyl-tRNA or glutaminyl-tRNA synthetases. The reaction takes place in the presence of glutamine and ATP through an activated phospho-Asp-tRNA(Asn) or phospho-Glu-tRNA(Gln). The chain is Aspartyl/glutamyl-tRNA(Asn/Gln) amidotransferase subunit C from Paracoccus denitrificans (strain Pd 1222).